Consider the following 707-residue polypeptide: Acyl-CoA ligase 891, peroxisomal (707 aa).

Residue 259–270 (INYTSGTTGPPK) coordinates ATP. The tract at residues 525-549 (DGWFRTGDVCTVDAQGRFIIIDRRK) is fatty acid-binding. The Peroxisome targeting signal signature appears at 705 to 707 (AKL).

The protein belongs to the ATP-dependent AMP-binding enzyme family.

The protein resides in the peroxisome matrix. It catalyses the reaction (4E,8E)-10-(4-hydroxy-6-methoxy-7-methyl-3-oxo-1,3-dihydro-2-benzofuran-5-yl)-4,8-dimethyldeca-4,8-dienoate + ATP + CoA = (4E,8E)-10-(4-hydroxy-6-methoxy-7-methyl-3-oxo-1,3-dihydro-2-benzofuran-5-yl)-4,8-dimethyldeca-4,8-dienoyl-CoA + AMP + diphosphate. Its pathway is secondary metabolite biosynthesis; terpenoid biosynthesis. Acyl-CoA ligase involved in the biosynthesis of mycophenolic acid (MPA), the first isolated antibiotic natural product in the world obtained from a culture of Penicillium brevicompactum in 1893. The peroxisomal acyl-CoA ligase 891 converts the intermediate MFDHMP-3C into MFDHMP-3C-CoA which impairs its diffusion from the peroxisome. The first step of the pathway is the synthesis of 5-methylorsellinic acid (5MOA) by the cytosolic polyketide synthase mpaC. 5MOA is then converted to the phthalide compound 5,7-dihydroxy-4,6-dimethylphthalide (DHMP) by the endoplasmic reticulum-bound cytochrome P450 monooxygenase mpaDE. MpaDE first catalyzes hydroxylation of 5-MOA to 4,6-dihydroxy-2-(hydroxymethyl)-3-methylbenzoic acid (DHMB). MpaDE then acts as a lactone synthase that catalyzes the ring closure to convert DHMB into DHMP. The next step is the prenylation of DHMP by the Golgi apparatus-associated prenyltransferase mpaA to yield farnesyl-DHMP (FDHMP). The ER-bound oxygenase mpaB then mediates the oxidative cleavage the C19-C20 double bond in FDHMP to yield FDHMP-3C via a mycophenolic aldehyde intermediate. The O-methyltransferase mpaG catalyzes the methylation of FDHMP-3C to yield MFDHMP-3C. After the cytosolic methylation of FDHMP-3C, MFDHMP-3C enters into peroxisomes probably via free diffusion due to its low molecular weight. Upon a peroxisomal CoA ligation reaction, catalyzed by a beta-oxidation component enzyme acyl-CoA ligase ACL891, MFDHMP-3C-CoA would then be restricted to peroxisomes for the following beta-oxidation pathway steps. The peroxisomal beta-oxidation machinery than converts MFDHMP-3C-CoA into MPA_CoA, via a beta-oxidation chain-shortening process. Finally mpaH acts as a peroxisomal acyl-CoA hydrolase with high substrate specificity toward MPA-CoA to release the final product MPA. The sequence is that of Acyl-CoA ligase 891, peroxisomal from Penicillium brevicompactum.